The following is a 320-amino-acid chain: tRNA U34 carboxymethyltransferase (320 aa).

Residues Lys89, Trp103, Lys108, Gly128, 150–152 (DPT), 179–180 (IE), Met194, Tyr198, and Arg313 contribute to the carboxy-S-adenosyl-L-methionine site.

Belongs to the class I-like SAM-binding methyltransferase superfamily. CmoB family. In terms of assembly, homotetramer.

It carries out the reaction carboxy-S-adenosyl-L-methionine + 5-hydroxyuridine(34) in tRNA = 5-carboxymethoxyuridine(34) in tRNA + S-adenosyl-L-homocysteine + H(+). Catalyzes carboxymethyl transfer from carboxy-S-adenosyl-L-methionine (Cx-SAM) to 5-hydroxyuridine (ho5U) to form 5-carboxymethoxyuridine (cmo5U) at position 34 in tRNAs. This chain is tRNA U34 carboxymethyltransferase, found in Glaesserella parasuis serovar 5 (strain SH0165) (Haemophilus parasuis).